The following is a 241-amino-acid chain: MPVTKCPRKVEPPWKGWDRKAQKNGLRHQVFAVNGDHYVGEWKGNLKHGKGTQVWKKSGAVYEGDWKFGKRDGYGSLSHPDPETGKLRRVYSGWWKGDKKSGYGIQFFGPKEYYEGEWCNNQRSGWGRMYYNNGDIYEGQWQNDKPEGEGMLRLKNGNRYEGIWERGMKNGHGRFFHLDHGQLFEGYWVDNVAKCGTMIDFGRDEAPEPTQFPIPKVEILDPDGVLKEALDKLMKPEEEEG.

The segment at 6–35 (CPRKVEPPWKGWDRKAQKNGLRHQVFAVNG) is interaction with MDM2. 7 MORN repeats span residues 38 to 60 (YVGEWKGNLKHGKGTQVWKKSGA), 62 to 84 (YEGDWKFGKRDGYGSLSHPDPET), 91 to 113 (YSGWWKGDKKSGYGIQFFGPKEY), 114 to 136 (YEGEWCNNQRSGWGRMYYNNGDI), 137 to 159 (YEGQWQNDKPEGEGMLRLKNGNR), 160 to 182 (YEGIWERGMKNGHGRFFHLDHGQ), and 184 to 205 (FEGYWVDNVAKCGTMIDFGRDE). The segment at 76–100 (SLSHPDPETGKLRRVYSGWWKGDKK) is interaction with SIRT1. Residues 206–240 (APEPTQFPIPKVEILDPDGVLKEALDKLMKPEEEE) form an interaction with TP53 region.

In terms of assembly, interacts with MEIG1. Interacts with TP53, MDM2 and SIRT1; the interactions mediate post-transcriptional modifications of TP53 by MDM2 and SIRT1. Expressed in testis (at protein level).

The protein resides in the cytoplasmic vesicle. The protein localises to the secretory vesicle. Its subcellular location is the acrosome. Functionally, assembles a suppression complex (suppresome) by tethering SIRT1 and MDM2 to regulate composite modifications of p53/TP53. Confers both deacetylation-mediated functional inactivation, by SIRT1, and ubiquitination-dependent degradation, by MDM2, of p53/TP53, promoting a proliferative and cell survival behaviors. May play a role in the regulation of spermatogenesis. The sequence is that of MORN repeat-containing protein 3 (Morn3) from Mus musculus (Mouse).